A 957-amino-acid polypeptide reads, in one-letter code: ERC protein 2 (957 aa).

Residues 1–13 are compositionally biased toward polar residues; it reads MYGSARTITNLEG. A disordered region spans residues 1 to 44; it reads MYGSARTITNLEGSPSRSPRLPRSPRLGHRRTSSGGGGGTGKTL. Over residues 14 to 25 the composition is skewed to low complexity; that stretch reads SPSRSPRLPRSP. Ser-65 and Ser-666 each carry phosphoserine. Positions 140–917 form a coiled coil; sequence RQVRDSTMLD…RMKLMADNYD (778 aa). The tract at residues 918–957 is disordered; the sequence is DDHHHYHHHHHHHHHRSPGRSQHSNHRPSPDQDDEEGIWA. Over residues 922 to 943 the composition is skewed to basic residues; that stretch reads HYHHHHHHHHHRSPGRSQHSNH. Residues 948-957 are compositionally biased toward acidic residues; it reads DQDDEEGIWA.

As to quaternary structure, interacts with BSN, ERC1, PPFIA1, PPFIA2, PPFIA3 and PPFIA4. Interacts through its C-terminus with the PDZ domain of RIMS1. Part of a complex consisting of ERC2, RIMS1 and UNC13A.

Its subcellular location is the cytoplasm. The protein localises to the synapse. It is found in the presynaptic active zone. It localises to the cytoskeleton. In terms of biological role, thought to be involved in the organization of the cytomatrix at the nerve terminals active zone (CAZ) which regulates neurotransmitter release. Seems to act together with BSN. May recruit liprin-alpha proteins to the CAZ. In Homo sapiens (Human), this protein is ERC protein 2 (ERC2).